Here is a 124-residue protein sequence, read N- to C-terminus: Small ribosomal subunit protein uS12 (124 aa).

A 3-methylthioaspartic acid modification is found at aspartate 89.

The protein belongs to the universal ribosomal protein uS12 family. In terms of assembly, part of the 30S ribosomal subunit. Contacts proteins S8 and S17. May interact with IF1 in the 30S initiation complex.

In terms of biological role, with S4 and S5 plays an important role in translational accuracy. Its function is as follows. Interacts with and stabilizes bases of the 16S rRNA that are involved in tRNA selection in the A site and with the mRNA backbone. Located at the interface of the 30S and 50S subunits, it traverses the body of the 30S subunit contacting proteins on the other side and probably holding the rRNA structure together. The combined cluster of proteins S8, S12 and S17 appears to hold together the shoulder and platform of the 30S subunit. The sequence is that of Small ribosomal subunit protein uS12 from Blochmanniella pennsylvanica (strain BPEN).